The primary structure comprises 95 residues: Secretoglobin family 2A member 1 (95 aa).

The signal sequence occupies residues Met-1–Ala-18. 2 N-linked (GlcNAc...) asparagine glycosylation sites follow: Asn-35 and Asn-72.

It belongs to the secretoglobin family. Lipophilin subfamily. In terms of assembly, prostatein is composed of three different peptides called C1, C2 and C3. These form covalent C1:C3 (F) and C2:C3 (S) heterodimers whose non-covalent association forms tetrameric (C1:C3/C3:C2) prostatein molecules. Expressed at very low level in ventral prostate.

The protein resides in the secreted. Part of prostatein which is the major secretory glycoprotein of ventral prostate gland. Steroid-binding protein; can bind non-polar steroids, cholesterol and a group of small proline-rich peptides. In Rattus norvegicus (Rat), this protein is Secretoglobin family 2A member 1.